Reading from the N-terminus, the 275-residue chain is Light-independent protochlorophyllide reductase iron-sulfur ATP-binding protein (275 aa).

ATP-binding positions include 12–17 (GIGKST) and lysine 41. Position 16 (serine 16) interacts with Mg(2+). Cysteine 97 and cysteine 131 together coordinate [4Fe-4S] cluster. 182 to 183 (NR) provides a ligand contact to ATP.

This sequence belongs to the NifH/BchL/ChlL family. In terms of assembly, homodimer. Protochlorophyllide reductase is composed of three subunits; BchL, BchN and BchB. [4Fe-4S] cluster is required as a cofactor.

The catalysed reaction is chlorophyllide a + oxidized 2[4Fe-4S]-[ferredoxin] + 2 ADP + 2 phosphate = protochlorophyllide a + reduced 2[4Fe-4S]-[ferredoxin] + 2 ATP + 2 H2O. Its pathway is porphyrin-containing compound metabolism; bacteriochlorophyll biosynthesis (light-independent). In terms of biological role, component of the dark-operative protochlorophyllide reductase (DPOR) that uses Mg-ATP and reduced ferredoxin to reduce ring D of protochlorophyllide (Pchlide) to form chlorophyllide a (Chlide). This reaction is light-independent. The L component serves as a unique electron donor to the NB-component of the complex, and binds Mg-ATP. The chain is Light-independent protochlorophyllide reductase iron-sulfur ATP-binding protein from Pelodictyon phaeoclathratiforme (strain DSM 5477 / BU-1).